An 861-amino-acid polypeptide reads, in one-letter code: Leucine--tRNA ligase (861 aa).

The short motif at 42 to 52 (PYPSGRIHMGH) is the 'HIGH' region element. Residues 623-627 (KMSKS) carry the 'KMSKS' region motif. K626 is a binding site for ATP.

It belongs to the class-I aminoacyl-tRNA synthetase family.

The protein localises to the cytoplasm. The enzyme catalyses tRNA(Leu) + L-leucine + ATP = L-leucyl-tRNA(Leu) + AMP + diphosphate. This chain is Leucine--tRNA ligase, found in Caulobacter sp. (strain K31).